The chain runs to 570 residues: Urease subunit alpha (570 aa).

The Urease domain maps to 131–570 (GGMDSHIHFI…LPMAQRYFLF (440 aa)). 3 residues coordinate Ni(2+): His-136, His-138, and Lys-219. Lys-219 is modified (N6-carboxylysine). Residue His-221 participates in substrate binding. Residues His-248 and His-274 each contribute to the Ni(2+) site. The active-site Proton donor is His-322. Asp-362 provides a ligand contact to Ni(2+).

The protein belongs to the metallo-dependent hydrolases superfamily. Urease alpha subunit family. In terms of assembly, heterotrimer of UreA (gamma), UreB (beta) and UreC (alpha) subunits. Three heterotrimers associate to form the active enzyme. The cofactor is Ni cation. Post-translationally, carboxylation allows a single lysine to coordinate two nickel ions.

It localises to the cytoplasm. It catalyses the reaction urea + 2 H2O + H(+) = hydrogencarbonate + 2 NH4(+). It functions in the pathway nitrogen metabolism; urea degradation; CO(2) and NH(3) from urea (urease route): step 1/1. This Rhizobium johnstonii (strain DSM 114642 / LMG 32736 / 3841) (Rhizobium leguminosarum bv. viciae) protein is Urease subunit alpha.